The sequence spans 218 residues: Enhancer of split M2 protein (218 aa).

Residues 1–25 (MYLDTKNLTASSTSALTAATASNSK) show a composition bias toward low complexity. Disordered regions lie at residues 1–30 (MYLD…TRRM), 64–86 (NTQQ…KSTP), and 137–164 (GRNC…SSSA). Positions 147–163 (SSNINSSSSSSNMNSSS) are enriched in low complexity.

Its function is as follows. Part of the Notch signaling pathway. The chain is Enhancer of split M2 protein from Drosophila melanogaster (Fruit fly).